A 358-amino-acid chain; its full sequence is uncharacterized protein (358 aa).

The disordered stretch occupies residues 324–358 (DMEVEETPPTTNKDLPRGATQPKRNSIKRVSKLID). The span at 348–358 (NSIKRVSKLID) shows a compositional bias: basic residues.

This is an uncharacterized protein from Mycoplasma pneumoniae (strain ATCC 29342 / M129 / Subtype 1) (Mycoplasmoides pneumoniae).